We begin with the raw amino-acid sequence, 580 residues long: Acyl-coenzyme A synthetase ACSM4, mitochondrial (580 aa).

Residues 1 to 22 constitute a mitochondrion transit peptide; sequence MKIFFRYQTFRFIWLTKPPGRR. ATP-binding positions include 229–237, 368–373, aspartate 455, arginine 470, and lysine 566; these read TSGTTGFPK and EGYGQT.

It belongs to the ATP-dependent AMP-binding enzyme family. Mg(2+) is required as a cofactor. Requires Mn(2+) as cofactor.

It is found in the mitochondrion. The enzyme catalyses a medium-chain fatty acid + ATP + CoA = a medium-chain fatty acyl-CoA + AMP + diphosphate. The catalysed reaction is hexanoate + ATP + CoA = hexanoyl-CoA + AMP + diphosphate. It catalyses the reaction octanoate + ATP + CoA = octanoyl-CoA + AMP + diphosphate. It carries out the reaction decanoate + ATP + CoA = decanoyl-CoA + AMP + diphosphate. The enzyme catalyses dodecanoate + ATP + CoA = dodecanoyl-CoA + AMP + diphosphate. In terms of biological role, catalyzes the activation of fatty acids by CoA to produce an acyl-CoA, the first step in fatty acid metabolism. Capable of activating medium-chain fatty acids with a preference for C6-12 fatty acids. The protein is Acyl-coenzyme A synthetase ACSM4, mitochondrial (ACSM4) of Homo sapiens (Human).